The sequence spans 1040 residues: Probable starch synthase 4, chloroplastic/amyloplastic (1040 aa).

Residues 1–42 (MTTKLSSFCFLTHGLAGISCEREHGSSRRFFYLPSRRLVSTS) constitute a chloroplast transit peptide. The interval 43-142 (CKMRQQRGFD…KSKTAKKKGE (100 aa)) is disordered. Composition is skewed to basic and acidic residues over residues 52–61 (DSSKRQEVKK) and 112–124 (NHAD…KDDI). Residues 187–466 (ELMTMIRSAE…EESKKKSRDE (280 aa)) are a coiled coil. Residues K556, G559, and D562 each coordinate ADP. Residues W679 and Q680 each coordinate (1,4-alpha-D-glucosyl)n. Residues R849, K854, K906, D908, Y916, L933, and T934 each coordinate ADP.

Belongs to the glycosyltransferase 1 family. Bacterial/plant glycogen synthase subfamily. As to quaternary structure, interacts with PTST2. Interacts with PII1; the interaction is essential for the initiation of starch granules biosynthesis in leaf chloroplasts. In terms of tissue distribution, expressed in leaves and flowers.

Its subcellular location is the plastid. The protein localises to the chloroplast. It localises to the amyloplast. The protein resides in the chloroplast stroma. It carries out the reaction [(1-&gt;4)-alpha-D-glucosyl](n) + ADP-alpha-D-glucose = [(1-&gt;4)-alpha-D-glucosyl](n+1) + ADP + H(+). Its pathway is glycan biosynthesis; starch biosynthesis. In terms of biological role, probably involved in the priming of starch granule formation. May play a regulatory role in the control of starch accumulation in plastids. Is necessary and sufficient to establish the correct number of starch granules observed in chloroplasts. The protein is Probable starch synthase 4, chloroplastic/amyloplastic of Arabidopsis thaliana (Mouse-ear cress).